An 84-amino-acid chain; its full sequence is MSKKSTSAALPSSFEEAMAELEQLVARMEAGELPLEASVAAYKRGSELVKYCAAQLEKVDSQVKVLEGDMLKPFNADRAIEADE.

It belongs to the XseB family. Heterooligomer composed of large and small subunits.

Its subcellular location is the cytoplasm. The enzyme catalyses Exonucleolytic cleavage in either 5'- to 3'- or 3'- to 5'-direction to yield nucleoside 5'-phosphates.. Bidirectionally degrades single-stranded DNA into large acid-insoluble oligonucleotides, which are then degraded further into small acid-soluble oligonucleotides. The sequence is that of Exodeoxyribonuclease 7 small subunit from Herminiimonas arsenicoxydans.